We begin with the raw amino-acid sequence, 84 residues long: Small ribosomal subunit protein uS17 (84 aa).

The protein belongs to the universal ribosomal protein uS17 family. In terms of assembly, part of the 30S ribosomal subunit.

Functionally, one of the primary rRNA binding proteins, it binds specifically to the 5'-end of 16S ribosomal RNA. The polypeptide is Small ribosomal subunit protein uS17 (Thermoanaerobacter pseudethanolicus (strain ATCC 33223 / 39E) (Clostridium thermohydrosulfuricum)).